The primary structure comprises 751 residues: Adhesive plaque matrix protein (751 aa).

Positions 1-20 (MEGIKLNLCLLCIFTCDILG) are cleaved as a signal peptide. The segment at 21-41 (FSNGNIYNAHGSAYAGASAGA) is nonrepetitive linker. A run of 55 repeats spans residues 109-118 (YKPKMTYPPT), 119-128 (YKPKPSYPPT), 129-138 (YKPKPSYPAT), 139-148 (YKSKSSYPSS), 149-158 (YKPKKTYPPT), 159-168 (YKPKLTYPPT), 169-178 (YKPKPSYPPT), 179-188 (YKPKPSYPAT), 189-198 (YKSKSSYPPS), 199-208 (YKTKKTYPSS), 209-218 (YKPKKTYPST), 219-228 (YKPKVSYPPT), 229-238 (YKSKKSYPPI), 239-248 (YKTKASYPSS), 249-258 (YKPKKTYPST), 259-268 (YKPKISYPPT), 269-278 (YKAKPSYPTS), 279-288 (YRAKPSYPST), 289-298 (YKAKPSYPPT), 299-308 (YKAKPSYPPT), 309-318 (YKAKPTYPST), 319-328 (YKAKPSYPPT), 329-338 (YKAKPSYPPT), 339-348 (YKAKPSYPPS), 349-358 (YKPKTTYPPS), 359-368 (YKPKISYPPT), 369-378 (YKAKPSYPPI), 379-388 (YKAKPSYPPT), 389-398 (YKAKPSYLPT), 399-408 (YKAKPSYPPT), 409-418 (YKAKPRYPTT), 419-428 (YKAKPSYPPT), 429-438 (YKAKPSYPPT), 439-448 (YKAKLSYPPT), 449-458 (YKAKPSYPPT), 459-468 (YKAKPSYPPT), 469-478 (YKAKPSYPPT), 479-488 (YKTKPSYPRT), 489-498 (YKAKPSYSST), 499-508 (YKAKPSYPPT), 509-518 (YKAKPSYPPT), 519-528 (YKAKPSYPPT), 529-538 (YKAKPSYPPT), 539-548 (YKAKPSYPPT), 549-558 (YKAKPSYPQT), 559-568 (YKAKSSYPPT), 569-578 (YKAKPSYPPT), 579-588 (YKAKPSYPPT), 589-598 (YKAKPSYPPT), 599-608 (YKAKPSYPPT), 609-618 (YKAKPSYPPT), 619-628 (YKAKPSYPPT), 629-638 (YKAKPSYPPT), 639-648 (YKAKPSYPPT), and 649-658 (YKAKPSYPAT). The 63 X 10 AA tandem repeats of Y-[KR]-[APTS]-K-[KPMSLTIVA]-[STR]-Y-[PLS]-[PASRQT]-[STI] stretch occupies residues 109–732 (YKPKMTYPPT…YKPKPSYPPT (624 aa)). A compositionally biased stretch (low complexity) spans 158 to 167 (TYKPKLTYPP). The interval 158–359 (TYKPKLTYPP…KPKTTYPPSY (202 aa)) is disordered. Residues 168–184 (TYKPKPSYPPTYKPKPS) show a composition bias toward pro residues. The span at 185–262 (YPATYKSKSS…KTYPSTYKPK (78 aa)) shows a compositional bias: low complexity. Low complexity-rich tracts occupy residues 288–343 (TYKA…KAKP) and 350–359 (KPKTTYPPSY). A disordered region spans residues 397–636 (PTYKAKPSYP…PTYKAKPSYP (240 aa)). Low complexity predominate over residues 444–486 (SYPPTYKAKPSYPPTYKAKPSYPPTYKAKPSYPPTYKTKPSYP). A 56; truncated repeat occupies 659–662 (YPST). Positions 660–751 (PSTYKAKPSY…KKKISYPSQY (92 aa)) are disordered. Positions 662–677 (TYKAKPSYPPTYKAKP) are enriched in low complexity. A run of 7 repeats spans residues 663-672 (YKAKPSYPPT), 673-682 (YKAKPSYPPT), 683-692 (YKPKPSYPPT), 693-702 (YKSKSSYPSS), 703-712 (YKPKKTYPPT), 713-722 (YKPKLTYPPI), and 723-732 (YKPKPSYPPT). Residues 678–690 (SYPPTYKPKPSYP) are compositionally biased toward pro residues. Residues 691–721 (PTYKSKSSYPSSYKPKKTYPPTYKPKLTYPP) show a composition bias toward low complexity.

Post-translationally, hydroxylated on proline (mono- or dihydroxylation) and tyrosine residues (to L-DOPA = 3',4'-dihydroxyphenylalanine) of the tandem repeats. As to expression, produced by the byssal gland.

It is found in the secreted. Provides adhesiveness to the mussel's foot. Mussels produce one of the strongest water insoluble glues. The mussel's adhesive is a bundle of threads, called a byssus, formed by a fibrous collagenous core coated with adhesive proteins. In Mytilus galloprovincialis (Mediterranean mussel), this protein is Adhesive plaque matrix protein (FP1).